Here is a 779-residue protein sequence, read N- to C-terminus: Endonuclease MutS2 (779 aa).

328 to 335 (GPNTGGKT) provides a ligand contact to ATP. In terms of domain architecture, Smr spans 704–779 (LDLRGKRYEE…GSGATIVTLG (76 aa)).

It belongs to the DNA mismatch repair MutS family. MutS2 subfamily. Homodimer. Binds to stalled ribosomes, contacting rRNA.

In terms of biological role, endonuclease that is involved in the suppression of homologous recombination and thus may have a key role in the control of bacterial genetic diversity. Its function is as follows. Acts as a ribosome collision sensor, splitting the ribosome into its 2 subunits. Detects stalled/collided 70S ribosomes which it binds and splits by an ATP-hydrolysis driven conformational change. Acts upstream of the ribosome quality control system (RQC), a ribosome-associated complex that mediates the extraction of incompletely synthesized nascent chains from stalled ribosomes and their subsequent degradation. Probably generates substrates for RQC. The sequence is that of Endonuclease MutS2 from Streptococcus pyogenes serotype M18 (strain MGAS8232).